The sequence spans 449 residues: uncharacterized protein (449 aa).

Positions 1-20 (MWTALVLIWIFSLSLSESHA) are cleaved as a signal peptide. Residues 21-400 (ASNDPRNFVP…PLTQAVVDKT (380 aa)) are Extracellular-facing. The N-linked (GlcNAc...) asparagine glycan is linked to N49. 3 disordered regions span residues 72 to 101 (AHLNSMEVTTEDTSRTDVSEPATSGGAADG), 154 to 187 (MTAASSTPMTLALPAPTSTSTGRTPSTTATGHPS), and 215 to 381 (QTVA…PSTQ). Composition is skewed to low complexity over residues 154 to 184 (MTAASSTPMTLALPAPTSTSTGRTPSTTATG) and 215 to 234 (QTVATTANTSSPMSTRPSPS). Composition is skewed to polar residues over residues 255–279 (GPISQVSVDQPVVNTTNKSTPMPSN) and 352–367 (TPGTDSTGPTPRSSGG). The chain crosses the membrane as a helical span at residues 401–421 (LLLVVLLLGVTLFITVLVLFA). The Cytoplasmic segment spans residues 422–449 (LQAYESYKKKDYTQVDYLINGMYADSEM).

Highest expression in heart, placenta, liver, pancreas and colon. Also detected in brain, lung, skeletal muscle, kidney, spleen, prostate, testis, ovary and small intestine. Lowest expression in thymus and leukocytes.

The protein localises to the cell membrane. The protein resides in the golgi apparatus. Its subcellular location is the trans-Golgi network membrane. This is an uncharacterized protein from Homo sapiens (Human).